The primary structure comprises 176 residues: Oleosin Ara h 14.0103 (176 aa).

N-acetylalanine; alternate is present on Ala-2. The next 3 membrane-spanning stretches (helical) occupy residues 50-70 (IIAVLVGVPTGGTLLLLSGLS), 75-95 (IIGLAIATPVFIFFSPVIVPA), and 96-116 (VVTIGLAVTGILTAGACGLTG). Residues 156–176 (KTKDAGQEIQTKAQDVKRSSS) are disordered.

The protein belongs to the oleosin family. Expressed in seeds (at protein level).

Its subcellular location is the lipid droplet. It is found in the membrane. Its function is as follows. May have a structural role to stabilize the lipid body during desiccation of the seed by preventing coalescence of the oil. Probably interacts with both lipid and phospholipid moieties of lipid bodies. May also provide recognition signals for specific lipase anchorage in lipolysis during seedling growth. In Arachis hypogaea (Peanut), this protein is Oleosin Ara h 14.0103.